Here is a 196-residue protein sequence, read N- to C-terminus: MNLIPTVIEQTSRGERAYDIYSRLLKDRIIILGSPIDDQVANSIVSQLLFLAAEDPEKDISLYINSPGGSITAGLAIYDTMQFIKPDVSTICIGMAASMGAFLLAAGAKGKRFALPNSEIMIHQPLGGAQGQATEIEIAAKRILFLRDKLNRILAENTGQPVEVIERDTDRDNFMTAQKAQEYGIIDRVLTRIDEK.

The Nucleophile role is filled by serine 98. Histidine 123 is a catalytic residue.

Belongs to the peptidase S14 family. Fourteen ClpP subunits assemble into 2 heptameric rings which stack back to back to give a disk-like structure with a central cavity, resembling the structure of eukaryotic proteasomes.

It is found in the cytoplasm. It carries out the reaction Hydrolysis of proteins to small peptides in the presence of ATP and magnesium. alpha-casein is the usual test substrate. In the absence of ATP, only oligopeptides shorter than five residues are hydrolyzed (such as succinyl-Leu-Tyr-|-NHMec, and Leu-Tyr-Leu-|-Tyr-Trp, in which cleavage of the -Tyr-|-Leu- and -Tyr-|-Trp bonds also occurs).. Functionally, cleaves peptides in various proteins in a process that requires ATP hydrolysis. Has a chymotrypsin-like activity. Plays a major role in the degradation of misfolded proteins. This Geobacillus sp. (strain WCH70) protein is ATP-dependent Clp protease proteolytic subunit.